A 114-amino-acid polypeptide reads, in one-letter code: Cystatin Pr17a (114 aa).

The N-terminal stretch at 1 to 18 (MSCLKIITLFLFLAAVIA) is a signal peptide. Residues 31–109 (GAPEQINPND…QAWLKKTSVK (79 aa)) form the Cystatin domain. A disulfide bridge links Cys93 with Cys113.

Belongs to the cystatin family. In terms of tissue distribution, expressed by the venom gland (posterior main gland) (at protein level).

It localises to the secreted. The polypeptide is Cystatin Pr17a (Platymeris rhadamanthus (Red spot assassin bug)).